The primary structure comprises 206 residues: Ras-related protein Rab7 (206 aa).

Residues 15–22, 63–67, and 125–128 each bind GTP; these read GDSGVGKT, DTAGQ, and NKVD. Residues Cys-205 and Cys-206 are each lipidated (S-geranylgeranyl cysteine).

The protein belongs to the small GTPase superfamily. Rab family.

It is found in the cell membrane. Its function is as follows. Protein transport. Probably involved in vesicular traffic. The chain is Ras-related protein Rab7 from Cenchrus ciliaris (Buffelgrass).